Reading from the N-terminus, the 82-residue chain is Envelope small membrane protein (82 aa).

Residues 1 to 16 (MLPFVHEQIGTIIVNF) lie on the Virion surface side of the membrane. The helical transmembrane segment at 17-37 (FILTVVCAITLVVCLAILTAI) threads the bilayer. At 38–78 (RLCVQCASGVNTLLFVPAFYIYNTGRNAYFKFQENRPPFPP) the chain is on the intravirion side.

Belongs to the betacoronaviruses E protein family. Homopentamer. Interacts with membrane protein M in the budding compartment of the host cell, which is located between endoplasmic reticulum and the Golgi complex. Interacts with Nucleoprotein.

The protein resides in the host Golgi apparatus membrane. Plays a central role in virus morphogenesis and assembly. Acts as a viroporin and self-assembles in host membranes forming pentameric protein-lipid pores that allow ion transport. Also plays a role in the induction of apoptosis. The protein is Envelope small membrane protein of Tylonycteris pachypus (Lesser bamboo bat).